The following is a 377-amino-acid chain: Signal peptide peptidase (377 aa).

Residues 1–27 (MDSALSDPHNGSAEAGGPTNSTTRPPS) are disordered. Residues 1–31 (MDSALSDPHNGSAEAGGPTNSTTRPPSTPEG) lie on the Lumenal side of the membrane. N-linked (GlcNAc...) asparagine glycans are attached at residues N10 and N20. The helical transmembrane segment at 32-52 (IALAYGSLLLMALLPIFFGAL) threads the bilayer. At 53–77 (RSVRCARGKNASDMPETITSRDAAR) the chain is on the cytoplasmic side. The helical transmembrane segment at 78-98 (FPIIASCTLLGLYLFFKIFSQ) threads the bilayer. Residues 99 to 100 (EY) are Lumenal-facing. A helical membrane pass occupies residues 101 to 121 (INLLLSMYFFVLGILALSHTI). The Cytoplasmic portion of the chain corresponds to 122–157 (SPFMNKFFPASFPNRQYQLLFTQGSGENKEEIINYE). Residues 158–178 (FDTKDLVCLGLSSIVGVWYLL) form a helical membrane-spanning segment. The Lumenal segment spans residues 179–181 (RKH). A helical transmembrane segment spans residues 182 to 202 (WIANNLFGLAFSLNGVELLHL). Over 203 to 209 (NNVSTGC) the chain is Cytoplasmic. A helical membrane pass occupies residues 210 to 230 (ILLGGLFIYDVFWVFGTNVMV). D219 is a catalytic residue. The Lumenal segment spans residues 231 to 256 (TVAKSFEAPIKLVFPQDLLEKGLEAN). The chain crosses the membrane as a helical span at residues 257–277 (NFAMLGLGDVVIPGIFIALLL). Residue D265 is part of the active site. Over 278 to 290 (RFDISLKKNTHTY) the chain is Cytoplasmic. The chain crosses the membrane as a helical span at residues 291-311 (FYTSFAAYIFGLGLTIFIMHI). Topologically, residues 312 to 314 (FKH) are lumenal. Residues 315–335 (AQPALLYLVPACIGFPVLVAL) traverse the membrane as a helical segment. The PAL motif lies at 317–319 (PAL). Residues 336–377 (AKGEVTEMFSYEESNPKDPAAVTESKEGTEASASKGLEKKEK) are Cytoplasmic-facing. The tract at residues 345-377 (SYEESNPKDPAAVTESKEGTEASASKGLEKKEK) is disordered. S367 is subject to Phosphoserine.

This sequence belongs to the peptidase A22B family. As to quaternary structure, monomer. Homodimer. Interacts with RNF139. Interacts with DERL1 and XBP1 isoform 1. Post-translationally, N-glycosylated. In terms of tissue distribution, widely expressed with highest levels in kidney, liver, placenta, lung, leukocytes and small intestine and reduced expression in heart and skeletal muscle. Expressed abundantly in the CNS with highest levels in thalamus and medulla.

It localises to the endoplasmic reticulum membrane. Its subcellular location is the membrane. The protein resides in the cell membrane. Its function is as follows. Catalyzes intramembrane proteolysis of signal peptides that have been removed from precursors of secretory and membrane proteins, resulting in the release of the fragment from the ER membrane into the cytoplasm. Required to generate lymphocyte cell surface (HLA-E) epitopes derived from MHC class I signal peptides. May be necessary for the removal of the signal peptide that remains attached to the hepatitis C virus core protein after the initial proteolytic processing of the polyprotein. Involved in the intramembrane cleavage of the integral membrane protein PSEN1. Cleaves the integral membrane protein XBP1 isoform 1 in a DERL1/RNF139-dependent manner. May play a role in graft rejection. The protein is Signal peptide peptidase of Homo sapiens (Human).